A 395-amino-acid chain; its full sequence is MATVDRWLLPDGIEEVLPPEAARIEVARRQVLDLFQSWGYEFVVTPHIEYLESLLTGAGQDLDLRTFKVIDPQSGRQMGFRADITPQVARIDAHTLRREGPSRLCYAGSVLHAQPRALSSSRSPIQLGAELYGDASPSSDVEVISLMLAMLQLADVPDVHMDLGHVGIYRGLAQAAGLSGAVEQQLFDALQRKAIDEVISLTEGLPADLADMLRSLVDLCGSREVLGDARRRLAGAPTSVLLALDELLTIAERLSVRFPDLPLYFDLGELRGYHYHTGVVFAVFVPGVGQSIAQGGRYDDIGADFGRARPATGFSTDLKTLVTLGRAEVELPSGGIWMPDNTDAALWQTVCRLRSEGQRVVQALPGQPLAAAREADCDRQLIQQNGLWQVLPLAS.

This sequence belongs to the class-II aminoacyl-tRNA synthetase family. HisZ subfamily. As to quaternary structure, heteromultimer composed of HisG and HisZ subunits.

Its subcellular location is the cytoplasm. The protein operates within amino-acid biosynthesis; L-histidine biosynthesis; L-histidine from 5-phospho-alpha-D-ribose 1-diphosphate: step 1/9. Required for the first step of histidine biosynthesis. May allow the feedback regulation of ATP phosphoribosyltransferase activity by histidine. In Pseudomonas fluorescens (strain ATCC BAA-477 / NRRL B-23932 / Pf-5), this protein is ATP phosphoribosyltransferase regulatory subunit.